Reading from the N-terminus, the 233-residue chain is CDP-diacylglycerol--glycerol-3-phosphate 3-phosphatidyltransferase 2 (233 aa).

Positions 1-23 (MGEEDTATVDQNSFGGGKDSLLR) are disordered. 5 helical membrane passes run 40–60 (VITL…ILVA), 71–91 (TATT…GYIA), 100–120 (FGAF…LILL), 125–145 (MVAV…IAII), and 201–221 (LPSG…SLVV).

This sequence belongs to the CDP-alcohol phosphatidyltransferase class-I family. Mn(2+) is required as a cofactor.

The protein resides in the microsome membrane. It localises to the endoplasmic reticulum membrane. The catalysed reaction is a CDP-1,2-diacyl-sn-glycerol + sn-glycerol 3-phosphate = a 1,2-diacyl-sn-glycero-3-phospho-(1'-sn-glycero-3'-phosphate) + CMP + H(+). Its pathway is phospholipid metabolism; phosphatidylglycerol biosynthesis; phosphatidylglycerol from CDP-diacylglycerol: step 1/2. Its function is as follows. Catalyzes the committed step to the synthesis of the acidic phospholipids, including phosphatidylglycerol (PG). Together with PGPS1, required for the proper embryo development by providing PG accurate levels. This chain is CDP-diacylglycerol--glycerol-3-phosphate 3-phosphatidyltransferase 2, found in Arabidopsis thaliana (Mouse-ear cress).